The following is a 405-amino-acid chain: 3-hydroxy-3-methylglutaryl-coenzyme A reductase (405 aa).

Active-site charge relay system residues include Glu-101 and Asp-305. Catalysis depends on His-400, which acts as the Proton donor.

The protein belongs to the HMG-CoA reductase family. Homodimer.

It localises to the cytoplasm. The enzyme catalyses (R)-mevalonate + 2 NADP(+) + CoA = (3S)-3-hydroxy-3-methylglutaryl-CoA + 2 NADPH + 2 H(+). Its pathway is metabolic intermediate biosynthesis; (R)-mevalonate biosynthesis; (R)-mevalonate from acetyl-CoA: step 3/3. Its activity is regulated as follows. Is competitively inhibited by lovastatin (formerly called mevinolin). Lovastatin also blocks the growth of H.salinarum, and this effect is reversed by addition of mevalonate, indicating the critical role that the mevalonate pathway plays in isoprenoid biosynthesis by these archaea. In terms of biological role, catalyzes the NADPH-dependent reductive deacylation of (S)-3-hydroxy-3-methylglutaryl-CoA (HMG-CoA) to (R)-mevalonate. Cannot use NADH instead of NADPH. Functions in the mevalonate (MVA) pathway leading to isopentenyl diphosphate (IPP), a key precursor for the biosynthesis of isoprenoid compounds such as archaeal membrane lipids. In Halobacterium salinarum (strain ATCC 29341 / DSM 671 / R1), this protein is 3-hydroxy-3-methylglutaryl-coenzyme A reductase (hmgA).